Reading from the N-terminus, the 972-residue chain is DNA cross-link repair 1A protein (972 aa).

A disordered region spans residues Y14 to D80. The segment covering Q23 to T37 has biased composition (polar residues). Residues G39–S54 are compositionally biased toward basic residues. Residues S64–D80 are compositionally biased toward basic and acidic residues. Residues D105 to G135 form a UBZ4-type zinc finger. The Zn(2+) site is built by C108, C111, H126, and C130. Disordered regions lie at residues K191 to C219 and G552 to E623. Positions N210 to C219 are enriched in polar residues.

The protein belongs to the DNA repair metallo-beta-lactamase (DRMBL) family. Binds PIAS1.

Its subcellular location is the nucleus. The enzyme catalyses a beta-lactam + H2O = a substituted beta-amino acid. Functionally, may be required for DNA interstrand cross-link repair. The sequence is that of DNA cross-link repair 1A protein (DCLRE1A) from Gallus gallus (Chicken).